A 488-amino-acid chain; its full sequence is Beta-amylase (488 aa).

Substrate-binding residues include Asp-51, His-91, and Asp-99. The active-site Proton donor is Glu-184. Positions 293, 298, and 340 each coordinate substrate. Glu-378 acts as the Proton acceptor in catalysis. Substrate contacts are provided by residues 379–380 and Arg-418; that span reads NA.

Belongs to the glycosyl hydrolase 14 family.

The catalysed reaction is Hydrolysis of (1-&gt;4)-alpha-D-glucosidic linkages in polysaccharides so as to remove successive maltose units from the non-reducing ends of the chains.. This chain is Beta-amylase (BMY1), found in Zea mays (Maize).